We begin with the raw amino-acid sequence, 287 residues long: Acetyl-coenzyme A carboxylase carboxyl transferase subunit beta (287 aa).

The CoA carboxyltransferase N-terminal domain occupies 28–287 (LWKKCPKCEN…ILSLLTNKVA (260 aa)). Zn(2+)-binding residues include cysteine 32, cysteine 35, cysteine 51, and cysteine 54. Residues 32-54 (CPKCENVLYRPELEKNLDVCPKC) form a C4-type zinc finger.

This sequence belongs to the AccD/PCCB family. As to quaternary structure, acetyl-CoA carboxylase is a heterohexamer composed of biotin carboxyl carrier protein (AccB), biotin carboxylase (AccC) and two subunits each of ACCase subunit alpha (AccA) and ACCase subunit beta (AccD). The cofactor is Zn(2+).

The protein localises to the cytoplasm. It carries out the reaction N(6)-carboxybiotinyl-L-lysyl-[protein] + acetyl-CoA = N(6)-biotinyl-L-lysyl-[protein] + malonyl-CoA. It participates in lipid metabolism; malonyl-CoA biosynthesis; malonyl-CoA from acetyl-CoA: step 1/1. Its function is as follows. Component of the acetyl coenzyme A carboxylase (ACC) complex. Biotin carboxylase (BC) catalyzes the carboxylation of biotin on its carrier protein (BCCP) and then the CO(2) group is transferred by the transcarboxylase to acetyl-CoA to form malonyl-CoA. In Marinomonas sp. (strain MWYL1), this protein is Acetyl-coenzyme A carboxylase carboxyl transferase subunit beta.